We begin with the raw amino-acid sequence, 362 residues long: Aminomethyltransferase (362 aa).

Belongs to the GcvT family. In terms of assembly, the glycine cleavage system is composed of four proteins: P, T, L and H.

It catalyses the reaction N(6)-[(R)-S(8)-aminomethyldihydrolipoyl]-L-lysyl-[protein] + (6S)-5,6,7,8-tetrahydrofolate = N(6)-[(R)-dihydrolipoyl]-L-lysyl-[protein] + (6R)-5,10-methylene-5,6,7,8-tetrahydrofolate + NH4(+). Functionally, the glycine cleavage system catalyzes the degradation of glycine. In Chlorobium limicola (strain DSM 245 / NBRC 103803 / 6330), this protein is Aminomethyltransferase.